The chain runs to 956 residues: RNA-binding protein 44 (956 aa).

A disordered region spans residues Asp301–Val321. Residues Ser750–Gly824 enclose the RRM domain. The tract at residues Lys831–Lys855 is disordered. Residues Ser840 to Thr854 show a composition bias toward basic and acidic residues.

It is found in the cytoplasm. Its function is as follows. Component of intercellular bridges during meiosis. Intercellular bridges are evolutionarily conserved structures that connect differentiating germ cells. Not required for fertility. The polypeptide is RNA-binding protein 44 (rbm44) (Danio rerio (Zebrafish)).